The chain runs to 891 residues: Extended synaptotagmin-3 (891 aa).

The segment at 1 to 30 (MQPEEPCAPSAPGGPDVPERGQRSRDPGPR) is disordered. At 1 to 32 (MQPEEPCAPSAPGGPDVPERGQRSRDPGPRLS) the chain is on the cytoplasmic side. A compositionally biased stretch (basic and acidic residues) spans 17–28 (VPERGQRSRDPG). The chain crosses the membrane as a helical span at residues 33-53 (GQLLPELYSFVARVLFYLAPV). A topological domain (lumenal) is located at residue Tyr-54. A helical transmembrane segment spans residues 55 to 75 (LAGYLGLSVTWLLLGALLWMW). Topologically, residues 76-891 (WRRNRRGKLG…ELTADGQPRS (816 aa)) are cytoplasmic. Positions 118 to 295 (DVERVEWANK…LPNRVTVPVK (178 aa)) constitute an SMP-LTD domain. 2 consecutive C2 domains span residues 292–412 (VPVK…DEWF) and 430–570 (SLLT…QLDH). Positions 325, 326, 336, 383, 384, 385, 387, 389, and 390 each coordinate Ca(2+). Positions 652–711 (SAATTDPEPMPEPQGPGPEPKGKDSARGLCESPGKKKNPATTFLTVPGLHSPGPIKSPRP) are disordered. Residues 659–670 (EPMPEPQGPGPE) show a composition bias toward pro residues. The 123-residue stretch at 759–881 (RLGEIQLTVR…DLIKGFSQWY (123 aa)) folds into the C2 3 domain. Positions 806 to 813 (RRWASRKK) are required for phosphatidylinositol 4,5-bisphosphate-dependent location at the cell membrane.

This sequence belongs to the extended synaptotagmin family.

The protein localises to the cell membrane. Its subcellular location is the endoplasmic reticulum membrane. In terms of biological role, tethers the endoplasmic reticulum to the cell membrane and promotes the formation of appositions between the endoplasmic reticulum and the cell membrane. Binds glycerophospholipids in a barrel-like domain and may play a role in cellular lipid transport. This Mus musculus (Mouse) protein is Extended synaptotagmin-3 (Esyt3).